Consider the following 323-residue polypeptide: Lipoyl synthase (323 aa).

7 residues coordinate [4Fe-4S] cluster: Cys-61, Cys-66, Cys-72, Cys-87, Cys-91, Cys-94, and Ser-300. The 217-residue stretch at 73–289 folds into the Radical SAM core domain; it reads WDKKHATFMI…ETVAYSKGFL (217 aa).

It belongs to the radical SAM superfamily. Lipoyl synthase family. The cofactor is [4Fe-4S] cluster.

The protein localises to the cytoplasm. The enzyme catalyses [[Fe-S] cluster scaffold protein carrying a second [4Fe-4S](2+) cluster] + N(6)-octanoyl-L-lysyl-[protein] + 2 oxidized [2Fe-2S]-[ferredoxin] + 2 S-adenosyl-L-methionine + 4 H(+) = [[Fe-S] cluster scaffold protein] + N(6)-[(R)-dihydrolipoyl]-L-lysyl-[protein] + 4 Fe(3+) + 2 hydrogen sulfide + 2 5'-deoxyadenosine + 2 L-methionine + 2 reduced [2Fe-2S]-[ferredoxin]. Its pathway is protein modification; protein lipoylation via endogenous pathway; protein N(6)-(lipoyl)lysine from octanoyl-[acyl-carrier-protein]: step 2/2. Catalyzes the radical-mediated insertion of two sulfur atoms into the C-6 and C-8 positions of the octanoyl moiety bound to the lipoyl domains of lipoate-dependent enzymes, thereby converting the octanoylated domains into lipoylated derivatives. The chain is Lipoyl synthase from Rhizobium leguminosarum bv. trifolii (strain WSM2304).